The sequence spans 318 residues: NADH-ubiquinone oxidoreductase chain 1 (318 aa).

8 consecutive transmembrane segments (helical) span residues 2 to 22, 70 to 90, 100 to 120, 136 to 156, 171 to 191, 231 to 251, 253 to 273, and 294 to 314; these read FLMN…FLTL, MFIL…IPMP, LGVL…LWSG, VAQT…IMML, HLWL…STLA, IIMM…NPLF, ELFT…FLWV, and LPLT…LAGI.

The protein belongs to the complex I subunit 1 family.

It localises to the mitochondrion inner membrane. The enzyme catalyses a ubiquinone + NADH + 5 H(+)(in) = a ubiquinol + NAD(+) + 4 H(+)(out). In terms of biological role, core subunit of the mitochondrial membrane respiratory chain NADH dehydrogenase (Complex I) that is believed to belong to the minimal assembly required for catalysis. Complex I functions in the transfer of electrons from NADH to the respiratory chain. The immediate electron acceptor for the enzyme is believed to be ubiquinone. This chain is NADH-ubiquinone oxidoreductase chain 1 (MT-ND1), found in Priodontes maximus (Giant armadillo).